The primary structure comprises 124 residues: Galanin peptides (124 aa).

Residues 1–19 (MARGSVILLGWLLLVVTLS) form the signal peptide. A propeptide spanning residues 20 to 30 (ATLGLGMPAKE) is cleaved from the precursor. Residue Thr-61 is modified to Threonine amide. A phosphoserine mark is found at Ser-117 and Ser-118.

It belongs to the galanin family. In terms of tissue distribution, expressed in retinal progenitor cells and retinal ganglion cells (at protein level).

The protein localises to the secreted. Its function is as follows. Endocrine hormone of the central and peripheral nervous systems that binds and activates the G protein-coupled receptors GALR1, GALR2, and GALR3. This small neuropeptide may regulate diverse physiologic functions including contraction of smooth muscle of the gastrointestinal and genitourinary tract, growth hormone and insulin release and adrenal secretion. This is Galanin peptides (Gal) from Mus musculus (Mouse).